A 234-amino-acid chain; its full sequence is MNIKTFEFYLFDIEGTTTPIEFVHKILFPYSVEKFDSFFQSNLLEKEWIEKLILEGKNDTTYSGKLSDSAFDLSEYCKHLVSLDRKSGILKEIQGRIWKSGYENGELKSSMFSDVPSFLKKIQASKKKSAVYSSGSIQAQKLIFEYSDFGNLTHFFYAYFDTGVGGKRESSSYSKISEQLGVAPEKILFFTDIKEEADAAKEAKLHSAILERPGNYPQPQHSHFKISSFEGLNP.

Residues 212–234 (RPGNYPQPQHSHFKISSFEGLNP) form a disordered region.

This sequence belongs to the HAD-like hydrolase superfamily. MasA/MtnC family. As to quaternary structure, monomer. Requires Mg(2+) as cofactor.

It carries out the reaction 5-methylsulfanyl-2,3-dioxopentyl phosphate + H2O = 1,2-dihydroxy-5-(methylsulfanyl)pent-1-en-3-one + phosphate. It functions in the pathway amino-acid biosynthesis; L-methionine biosynthesis via salvage pathway; L-methionine from S-methyl-5-thio-alpha-D-ribose 1-phosphate: step 3/6. Its pathway is amino-acid biosynthesis; L-methionine biosynthesis via salvage pathway; L-methionine from S-methyl-5-thio-alpha-D-ribose 1-phosphate: step 4/6. Bifunctional enzyme that catalyzes the enolization of 2,3-diketo-5-methylthiopentyl-1-phosphate (DK-MTP-1-P) into the intermediate 2-hydroxy-3-keto-5-methylthiopentenyl-1-phosphate (HK-MTPenyl-1-P), which is then dephosphorylated to form the acireductone 1,2-dihydroxy-3-keto-5-methylthiopentene (DHK-MTPene). This is Enolase-phosphatase E1 from Leptospira interrogans serogroup Icterohaemorrhagiae serovar copenhageni (strain Fiocruz L1-130).